A 375-amino-acid polypeptide reads, in one-letter code: Alcohol dehydrogenase 1C (375 aa).

At Ser-2 the chain carries N-acetylserine. Ser-23 is modified (phosphoserine). Zn(2+)-binding residues include Cys-47, His-68, Cys-98, Cys-101, Cys-104, Cys-112, and Cys-175. Residues Gly-200–Gly-205, Asp-224, Lys-229, Ile-270, Val-293–Val-295, Ala-318–Phe-320, and Arg-370 each bind NAD(+).

The protein belongs to the zinc-containing alcohol dehydrogenase family. In terms of assembly, dimer of identical or non-identical chains of class I alcohol dehydrogenase: ADH1A, ADH1B, and ADH1C. Zn(2+) is required as a cofactor. Expressed in kidney.

The protein resides in the cytoplasm. It catalyses the reaction a primary alcohol + NAD(+) = an aldehyde + NADH + H(+). It carries out the reaction ethanol + NAD(+) = acetaldehyde + NADH + H(+). In terms of biological role, alcohol dehydrogenase. Exhibits high activity for ethanol oxidation and plays a major role in ethanol catabolism. The protein is Alcohol dehydrogenase 1C (ADH1C) of Papio hamadryas (Hamadryas baboon).